We begin with the raw amino-acid sequence, 1254 residues long: SUN domain-containing ossification factor (1254 aa).

The signal sequence occupies residues 1–29 (MKKHRRALALVSCLFLCSLVWLPSWRVCC). Disordered stretches follow at residues 58–88 (KKDE…HKLK), 118–270 (EESS…DIPT), and 282–304 (EKEK…KKVQ). Residues 130–145 (VENISSSSTSEITPIS) are compositionally biased toward low complexity. Residues 165–175 (EQSETDCDVGE) show a composition bias toward acidic residues. Residues asparagine 202 and asparagine 236 are each glycosylated (N-linked (GlcNAc...) asparagine). Positions 241–253 (LKNESSDYTKPGD) are enriched in basic and acidic residues. Positions 284 to 453 (EKSQSMHASS…SLIRVFGTSM (170 aa)) constitute an SUN domain. Residues 288–297 (SMHASSNGGS) are compositionally biased toward polar residues. A glycan (N-linked (GlcNAc...) asparagine) is linked at asparagine 524. Disordered regions lie at residues 530 to 553 (NATA…PSPE), 583 to 605 (EEEE…EDES), and 759 to 788 (HIPS…SSIE). Low complexity predominate over residues 540–553 (PESTPVSTPVPSPE). Residues 909-1009 (NQKESVFMRL…VAELKREVSD (101 aa)) are a coiled coil. N-linked (GlcNAc...) asparagine glycans are attached at residues asparagine 928 and asparagine 955. A helical membrane pass occupies residues 1011 to 1031 (QSYLVISLVLCVVLGLMLCMQ). Residue serine 1081 is modified to Phosphoserine. The segment at 1152–1172 (EVYHSSYKGPPSEGSSETSSQ) is disordered. Residues 1163-1172 (SEGSSETSSQ) are compositionally biased toward low complexity.

O-glycosylated. O-mannosylated by POMT1 and POMT2 and elongated by POMGNT1. Post-translationally, N-glycosylated. Highly expressed in pancreas and testis and to a lower extent in prostate, ovary, heart, thymus, small intestine and spleen.

The protein localises to the rough endoplasmic reticulum membrane. Its function is as follows. Required for bone modeling during late embryogenesis. Regulates type I collagen synthesis in osteoblasts during their postnatal maturation. The polypeptide is SUN domain-containing ossification factor (SUCO) (Homo sapiens (Human)).